A 448-amino-acid polypeptide reads, in one-letter code: Charged multivesicular body protein 7 (448 aa).

Residues 1–12 (MCSPGRAPPGPA) are compositionally biased toward pro residues. The tract at residues 1 to 20 (MCSPGRAPPGPAPAGDLPPE) is disordered. The stretch at 241 to 392 (QLMQSEQLLS…DSLLQDSAKE (152 aa)) forms a coiled coil.

Belongs to the SNF7 family.

The protein resides in the cytoplasm. Its subcellular location is the nucleus envelope. In terms of biological role, ESCRT-III-like protein required to recruit the ESCRT-III complex to the nuclear envelope (NE) during late anaphase. Together with SPAST, the ESCRT-III complex promotes NE sealing and mitotic spindle disassembly during late anaphase. Recruited to the reforming NE during anaphase by LEMD2. Plays a role in the endosomal sorting pathway. In Gallus gallus (Chicken), this protein is Charged multivesicular body protein 7 (CHMP7).